Here is a 100-residue protein sequence, read N- to C-terminus: Glyceraldehyde-3-phosphate dehydrogenase, testis-specific (100 aa).

Positions 39 and 64 each coordinate NAD(+). Position 89 (R89) interacts with D-glyceraldehyde 3-phosphate.

This sequence belongs to the glyceraldehyde-3-phosphate dehydrogenase family. Homotetramer.

It localises to the cytoplasm. It catalyses the reaction D-glyceraldehyde 3-phosphate + phosphate + NAD(+) = (2R)-3-phospho-glyceroyl phosphate + NADH + H(+). Its pathway is carbohydrate degradation; glycolysis; pyruvate from D-glyceraldehyde 3-phosphate: step 1/5. May play an important role in regulating the switch between different pathways for energy production during spermiogenesis and in the spermatozoon. Required for sperm motility and male fertility. The chain is Glyceraldehyde-3-phosphate dehydrogenase, testis-specific from Mesocricetus auratus (Golden hamster).